Reading from the N-terminus, the 300-residue chain is MKIQCAIIGSGNIGTDLMAKLQRSPVLEPAWMVGIDPDSDGLARARAAGLKTTHEGVDGLLPHIEGDGVRIAFDATSAYVHAENDRKLQEKGVMVIDLTPAAIGPFCVPPVNLKDRIGDGATNVNMVTCGGQATVPIVAAVSQVQPVDYAEIVATISSRSAGPGTRKNIDEFTRTTSRAIEQVGGAKQGKAIIILNPAEPPLIMRDTVHCLVQGKPDHKAITESIERMVAEVQRYVPGYRIKNGPTFDGQRVSTFLEVEGLGDYLPHYSGNLDIMTAAAARAAEIFAESLQSASDAPATA.

10–13 (SGNI) contributes to the NAD(+) binding site. Catalysis depends on Cys-129, which acts as the Acyl-thioester intermediate. NAD(+)-binding positions include 160–168 (SAGPGTRKN) and Asn-271.

It belongs to the acetaldehyde dehydrogenase family.

The enzyme catalyses acetaldehyde + NAD(+) + CoA = acetyl-CoA + NADH + H(+). This is Acetaldehyde dehydrogenase from Alkalilimnicola ehrlichii (strain ATCC BAA-1101 / DSM 17681 / MLHE-1).